The chain runs to 611 residues: Poly(3-hydroxyalkanoate) polymerase subunit PhaC (611 aa).

The active site involves Cys-349.

The protein belongs to the PHA/PHB synthase family. Type I PhaC subfamily. In terms of assembly, monomer.

It is found in the cytoplasm. The catalysed reaction is (3R)-3-hydroxybutanoyl-CoA + [(3R)-hydroxybutanoate](n) = [(3R)-hydroxybutanoate](n+1) + CoA. It participates in biopolymer metabolism; poly-(R)-3-hydroxybutanoate biosynthesis. Its function is as follows. Polymerizes D(-)-3-hydroxybutyryl-CoA to create PHB which consists of thousands of hydroxybutyrate molecules linked end to end. PHB serves as an intracellular energy reserve material when cells grow under conditions of nutrient limitation. In Rhizobium meliloti (strain 1021) (Ensifer meliloti), this protein is Poly(3-hydroxyalkanoate) polymerase subunit PhaC.